Reading from the N-terminus, the 337-residue chain is Transcription initiation factor IIB (337 aa).

The TFIIB-type zinc-finger motif lies at 37–68; the sequence is EKAVCPECGSRNLVHDYERAELVCGDCGLVID. Cys41, Cys44, Cys60, and Cys63 together coordinate Zn(2+). Tandem repeats lie at residues 154–237 and 248–329.

This sequence belongs to the TFIIB family.

Functionally, stabilizes TBP binding to an archaeal box-A promoter. Also responsible for recruiting RNA polymerase II to the pre-initiation complex (DNA-TBP-TFIIB). The chain is Transcription initiation factor IIB from Methanosarcina mazei (Methanosarcina frisia).